Consider the following 544-residue polypeptide: Potential vesicular glutamate transporter vglu-3 (544 aa).

The Cytoplasmic segment spans residues 1–49; sequence MPNGSIRNCANAVADTVRQTFSRKTWEHKEQLQTITEQKKFFLRKVRWQ. The chain crosses the membrane as a helical span at residues 50 to 70; sequence IAILAHFGFAISFGIRSNFGV. The Extracellular portion of the chain corresponds to 71–104; the sequence is AKNRMVNNFTDAYGEVHEREFLWTGAEVGMMESS. Asparagine 78 carries an N-linked (GlcNAc...) asparagine glycan. Residues 105–125 traverse the membrane as a helical segment; sequence FFYGYAASQIPAGVLAAKFAP. Residues 126-127 lie on the Cytoplasmic side of the membrane; it reads NK. The chain crosses the membrane as a helical span at residues 128-148; sequence IFMLGILVASFMNILSAISFN. The Extracellular segment spans residues 149–154; the sequence is FHPYTD. The helical transmembrane segment at 155–175 threads the bilayer; sequence IFVMVVQAVQGLALGVLYPAM. The Cytoplasmic portion of the chain corresponds to 176–193; it reads HGVWKFWAPPLERSKLAT. A helical membrane pass occupies residues 194 to 214; the sequence is TAFTGSSVGVMTGLPASAYLV. Residues 215 to 219 are Extracellular-facing; it reads SHFSW. A helical transmembrane segment spans residues 220–240; that stretch reads STPFYVFGVVGIIWSLIWMYV. The Cytoplasmic segment spans residues 241-285; it reads SSHSPETHGYISDDEKKQVTEKIGDVAVKNMSLTTLPWRDMMTSS. A helical transmembrane segment spans residues 286-306; it reads AVWAIIICTFCRSWGFFLLLG. Topologically, residues 307–323 are extracellular; the sequence is NQLTYMKDVLHIDIKNS. The chain crosses the membrane as a helical span at residues 324-344; the sequence is GFISIFPQFGMCIVTLATGQL. The Cytoplasmic segment spans residues 345-360; that stretch reads CDYLRSSGKMSTEAVR. A helical transmembrane segment spans residues 361–381; that stretch reads KSVNTFGFTVEAMMLGCLAFV. At 382-384 the chain is on the extracellular side; sequence RDP. A helical transmembrane segment spans residues 385 to 405; the sequence is VIAVTCLVIACTGSGSVLSGF. The Cytoplasmic segment spans residues 406-416; it reads NVNHFDIAPRY. A helical membrane pass occupies residues 417–437; it reads APILMGIANGLGAVAGVGGMV. The Extracellular portion of the chain corresponds to 438–450; that stretch reads TNTVTYQNPDGWK. The helical transmembrane segment at 451–471 threads the bilayer; the sequence is WVFLLAMAIDIFGVIFFLIFA. The Cytoplasmic segment spans residues 472–544; that stretch reads KGDVLPWARE…APAEKSESSS (73 aa). The interval 501 to 544 is disordered; it reads SLSRKTRNREGDTSYEKMEEDSEMKPCSKKVEARAPAEKSESSS. The span at 508–544 shows a compositional bias: basic and acidic residues; it reads NREGDTSYEKMEEDSEMKPCSKKVEARAPAEKSESSS.

The protein belongs to the major facilitator superfamily. Sodium/anion cotransporter family. VGLUT subfamily.

It localises to the membrane. This is Potential vesicular glutamate transporter vglu-3 (vglu-3) from Caenorhabditis elegans.